A 345-amino-acid polypeptide reads, in one-letter code: Phosphoribosylformylglycinamidine cyclo-ligase (345 aa).

This sequence belongs to the AIR synthase family. As to quaternary structure, homodimer.

It localises to the cytoplasm. It carries out the reaction 2-formamido-N(1)-(5-O-phospho-beta-D-ribosyl)acetamidine + ATP = 5-amino-1-(5-phospho-beta-D-ribosyl)imidazole + ADP + phosphate + H(+). Its pathway is purine metabolism; IMP biosynthesis via de novo pathway; 5-amino-1-(5-phospho-D-ribosyl)imidazole from N(2)-formyl-N(1)-(5-phospho-D-ribosyl)glycinamide: step 2/2. The polypeptide is Phosphoribosylformylglycinamidine cyclo-ligase (Escherichia coli O157:H7).